Here is a 605-residue protein sequence, read N- to C-terminus: DNA mismatch repair protein MutL (605 aa).

This sequence belongs to the DNA mismatch repair MutL/HexB family.

Its function is as follows. This protein is involved in the repair of mismatches in DNA. It is required for dam-dependent methyl-directed DNA mismatch repair. May act as a 'molecular matchmaker', a protein that promotes the formation of a stable complex between two or more DNA-binding proteins in an ATP-dependent manner without itself being part of a final effector complex. The chain is DNA mismatch repair protein MutL from Sinorhizobium medicae (strain WSM419) (Ensifer medicae).